Reading from the N-terminus, the 207-residue chain is Large ribosomal subunit protein uL4 (207 aa).

Residues 53–85 (ERSDVARTGKKFGRQKGGGTARHGDRKAPIFIG) are disordered.

This sequence belongs to the universal ribosomal protein uL4 family. As to quaternary structure, part of the 50S ribosomal subunit.

In terms of biological role, one of the primary rRNA binding proteins, this protein initially binds near the 5'-end of the 23S rRNA. It is important during the early stages of 50S assembly. It makes multiple contacts with different domains of the 23S rRNA in the assembled 50S subunit and ribosome. Functionally, forms part of the polypeptide exit tunnel. The protein is Large ribosomal subunit protein uL4 of Novosphingobium aromaticivorans (strain ATCC 700278 / DSM 12444 / CCUG 56034 / CIP 105152 / NBRC 16084 / F199).